We begin with the raw amino-acid sequence, 615 residues long: MLRSVVNNNDKAKESEQSVRVATDDPTYQSYAFQPSTSSSNISWFGGLRTKLSQLSLFPDWMSQLGIKSDDEKMETSSTSSPQSEQSIGEYDESTLVFRPVQLDHFGGAGQEDDGEQVDIWDFGATFLADLDSNHVWNDTIERQHFGPLKDLITTGGGANKINNHSFKTHSLLHPTWCDKCGDFIWGILKEALKCEHCNYTCHARCRDLVTLDCRSPGSSLASSTEFDSIYPQLDGTLGTIPKGLILPPAMSSSTGSDKENGNGNSAGISAENPIFSVKNSFTLPKSFSPVDSLRTKEPSAPPESRYATLRVVERYVKEDTPFEWTDEYKEMDLERKIHSYNSLAKGMEITLHEDGVNFGGHIHVNMNLSRPISVVQGVIPPTVYDVVNTAKSTAKTTSLRTITSFFLPRNTAKVINIDSKTTARKMIVTLLKKFRVADNPRKFALYECEQITDEATCTLNRKLTRISDDACPLKVVLNWQSPHCGRALVLQENDTGDILWDAFEIPELENFLRILGMEEKQYVFQTQQKYQQYRYHLDAELRQRGHSVPDAAAQPMVQTNPFLDEEFLRNQDEYGTSDSMLFSGTIKNAIMGEDPDYVNLEYLKKQNMDQSTNL.

Disordered regions lie at residues Met-1–Gln-29 and Ser-69–Gly-89. The segment covering Thr-76–Ser-87 has biased composition (low complexity). The Phorbol-ester/DAG-type zinc finger occupies Asn-164 to Cys-214. The disordered stretch occupies residues Pro-249–Gly-268. The span at Met-251–Gly-268 shows a compositional bias: polar residues. The 101-residue stretch at Lys-396 to Thr-496 folds into the Ras-associating domain. The region spanning Asp-498–Arg-545 is the SARAH domain.

In terms of assembly, interacts with rab-39 (GTP-bound form). Interacts (via SARAH domain) with cst-1; the interaction is required for the phosphorylation of cst-1. As to expression, expressed in the pharynx, epithelial cells, ciliated neurons in the head, body wall muscles, hypodermis, vulva, gonadal sheath cells, tail hypodermis and in coelomocytes. Expressed in the pharynx, neurons and vulva.

It localises to the cytoplasm. The protein localises to the cytoskeleton. Functionally, involved in embryonic morphogenesis. Plays a role in the organization of apical filamentous actin in epithelial cells of the developing embryo. May play a role in let-60-mediated vulval development. May induce nuclear condensation. Positively regulates the oxidative stress response, and this may be in association with the small GTPase rab-39. Not required for muscle integrity. This is Ras association domain-containing protein 1 homolog from Caenorhabditis elegans.